The primary structure comprises 149 residues: Ribonuclease H (149 aa).

Residues 1–142 (MSTITIHTDG…ADELAREGLA (142 aa)) enclose the RNase H type-1 domain. Residues aspartate 9, glutamate 47, aspartate 70, and aspartate 134 each coordinate Mg(2+). The interval 124–149 (HAGDPGNERADELAREGLAEARGRQP) is disordered. Over residues 129–149 (GNERADELAREGLAEARGRQP) the composition is skewed to basic and acidic residues.

This sequence belongs to the RNase H family. Monomer. The cofactor is Mg(2+).

The protein localises to the cytoplasm. It carries out the reaction Endonucleolytic cleavage to 5'-phosphomonoester.. Endonuclease that specifically degrades the RNA of RNA-DNA hybrids. This chain is Ribonuclease H, found in Maricaulis maris (strain MCS10) (Caulobacter maris).